The sequence spans 268 residues: Ribosomal RNA small subunit methyltransferase A (268 aa).

Asn-23, Ile-25, Gly-50, Glu-72, Asp-97, and Asn-116 together coordinate S-adenosyl-L-methionine.

It belongs to the class I-like SAM-binding methyltransferase superfamily. rRNA adenine N(6)-methyltransferase family. RsmA subfamily.

The protein localises to the cytoplasm. It catalyses the reaction adenosine(1518)/adenosine(1519) in 16S rRNA + 4 S-adenosyl-L-methionine = N(6)-dimethyladenosine(1518)/N(6)-dimethyladenosine(1519) in 16S rRNA + 4 S-adenosyl-L-homocysteine + 4 H(+). In terms of biological role, specifically dimethylates two adjacent adenosines (A1518 and A1519) in the loop of a conserved hairpin near the 3'-end of 16S rRNA in the 30S particle. May play a critical role in biogenesis of 30S subunits. This Rickettsia bellii (strain RML369-C) protein is Ribosomal RNA small subunit methyltransferase A.